We begin with the raw amino-acid sequence, 615 residues long: Aspartokinase (615 aa).

Disordered regions lie at residues 84-105 (ALQP…GTAT) and 127-171 (SSVS…SISQ). Low complexity-rich tracts occupy residues 90-102 (SSSG…SMSG) and 127-164 (SSVS…ATPS). The ACT domain occupies 467-537 (IHSNRKTLSH…EVTVSKDMAI (71 aa)).

This sequence belongs to the aspartokinase family.

The enzyme catalyses L-aspartate + ATP = 4-phospho-L-aspartate + ADP. It participates in amino-acid biosynthesis; L-methionine biosynthesis via de novo pathway; L-homoserine from L-aspartate: step 1/3. Its pathway is amino-acid biosynthesis; L-threonine biosynthesis; L-threonine from L-aspartate: step 1/5. Its function is as follows. Phosphorylates aspartate, the first step in the biosynthesis of amino acids that derive from aspartate (the aspartate family of amino acids), including methioinine and threonine, the latter of which is a precursor to isoleucine. This Cryptococcus neoformans var. grubii serotype A (strain H99 / ATCC 208821 / CBS 10515 / FGSC 9487) (Filobasidiella neoformans var. grubii) protein is Aspartokinase.